Consider the following 325-residue polypeptide: Tagatose 1,6-diphosphate aldolase 1 (325 aa).

Belongs to the aldolase LacD family.

It carries out the reaction D-tagatofuranose 1,6-bisphosphate = D-glyceraldehyde 3-phosphate + dihydroxyacetone phosphate. The protein operates within carbohydrate metabolism; D-tagatose 6-phosphate degradation; D-glyceraldehyde 3-phosphate and glycerone phosphate from D-tagatose 6-phosphate: step 2/2. The protein is Tagatose 1,6-diphosphate aldolase 1 (lacD1) of Streptococcus pyogenes serotype M3 (strain ATCC BAA-595 / MGAS315).